The chain runs to 219 residues: Ras-related protein Rab-3B (219 aa).

Alanine 2 is subject to N-acetylalanine. GTP contacts are provided by serine 31, serine 32, valine 33, glycine 34, lysine 35, threonine 36, serine 37, proline 49, and serine 53. Mg(2+) is bound at residue threonine 36. The short motif at 45-58 (DTFTPAFVSTVGID) is the Switch 1 element. Threonine 54 and aspartate 77 together coordinate Mg(2+). Residues 78–96 (TAGQERYRTITTAYYRGAM) carry the Switch 2 motif. Residue glycine 80 participates in GTP binding. Threonine 86 bears the Phosphothreonine mark. GTP contacts are provided by asparagine 135, lysine 136, aspartate 138, alanine 166, and lysine 167. Serine 188 carries the post-translational modification Phosphoserine. S-geranylgeranyl cysteine attachment occurs at residues cysteine 217 and cysteine 219. Cysteine 219 carries the post-translational modification Cysteine methyl ester.

Belongs to the small GTPase superfamily. Rab family. Interacts with RIMS1, RIMS2, RPH3A and RPH3AL. The GTP-bound form interacts with GAS8/DRC4 (via coiled-coil domains). Interacts with GDI2, CHM and CHML; phosphorylation at Thr-86 disrupts these interactions. Interacts with MADD (via uDENN domain); the GTP-bound form is preferred for interaction. It depends on Mg(2+) as a cofactor. In terms of processing, phosphorylation of Thr-86 in the switch II region by LRRK2 prevents the association of RAB regulatory proteins, including CHM, CHML and RAB GDP dissociation inhibitor GDI2.

The protein localises to the cell membrane. It localises to the golgi apparatus. The catalysed reaction is GTP + H2O = GDP + phosphate + H(+). Regulated by guanine nucleotide exchange factors (GEFs) which promote the exchange of bound GDP for free GTP. Regulated by GTPase activating proteins (GAPs) which increase the GTP hydrolysis activity. Inhibited by GDP dissociation inhibitors (GDIs) which prevent Rab-GDP dissociation. Its function is as follows. The small GTPases Rab are key regulators of intracellular membrane trafficking, from the formation of transport vesicles to their fusion with membranes. Rabs cycle between an inactive GDP-bound form and an active GTP-bound form that is able to recruit to membranes different sets of downstream effectors directly responsible for vesicle formation, movement, tethering and fusion. The polypeptide is Ras-related protein Rab-3B (RAB3B) (Bos taurus (Bovine)).